Here is a 316-residue protein sequence, read N- to C-terminus: Probable cell division protein WhiA (316 aa).

Positions 275-309 form a DNA-binding region, H-T-H motif; that stretch reads TLKELGEMVSGGKISKSGINHRLRKIDEIAEKLRA.

This sequence belongs to the WhiA family.

Its function is as follows. Involved in cell division and chromosome segregation. This chain is Probable cell division protein WhiA, found in Bacillus cytotoxicus (strain DSM 22905 / CIP 110041 / 391-98 / NVH 391-98).